The primary structure comprises 173 residues: uncharacterized protein (173 aa).

This is an uncharacterized protein from Haemophilus influenzae (strain ATCC 51907 / DSM 11121 / KW20 / Rd).